The sequence spans 242 residues: MKKLLSILAVFGVSAVGTTSVVACNKTESNNLSRVKTIAAPATVAASTPKAVTKPEIKTALEANVLKAVQGVVKTATAADFQFEVYKNSKGTALETIDLEAGKVEVYLQITPAKDKTVVIGETRYIKVTLPKHGEVTKVDIKDVTVTEQTVGIKASTPKAVKKDELNAVNTYATLAKAVLDAIQNIAPNAGASDFEITNNGAEGDYEAAKEVEVTVKAKNDSANISGQFKFKAKVTATAPTE.

An N-terminal signal peptide occupies residues 1 to 23 (MKKLLSILAVFGVSAVGTTSVVA). The N-palmitoyl cysteine moiety is linked to residue C24. C24 is lipidated: S-diacylglycerol cysteine.

It belongs to the spiralin family. As to quaternary structure, seems to occur as dimer, tetramers, and large oligomers of identical chains. Palmitate and stearate are the major lipid components.

Its subcellular location is the cell membrane. In terms of biological role, major membrane protein of spiroplasma. The protein is Spiralin (spi) of Spiroplasma melliferum.